Consider the following 80-residue polypeptide: Protein FAM229B (80 aa).

The segment at 1–44 (MPFQFGTQPRRFPVEGGDSSIELEPGLSSSAACNGKEMSPTRQL) is disordered.

The protein belongs to the FAM229 family.

The sequence is that of Protein FAM229B (FAM229B) from Homo sapiens (Human).